A 130-amino-acid chain; its full sequence is uncharacterized protein (130 aa).

Residues 1–58 (MREQLKLFTREIVDFTFLILSGFDYYQTLLISSNSSKKRPKDSSLLSEKKKKKKKKKK) are Cytoplasmic-facing. The segment at 34–57 (NSSKKRPKDSSLLSEKKKKKKKKK) is disordered. The chain crosses the membrane as a helical span at residues 59–79 (DVLSYLSYLKDLPFVPFLFWQ). At 80-94 (PGYSQREKNPRQHSL) the chain is on the extracellular side. A helical transmembrane segment spans residues 95–115 (FIMTITKPGMISMADMNYVVS). The Cytoplasmic segment spans residues 116–130 (KNRSLNRPAERGGNR).

It is found in the membrane. This is an uncharacterized protein from Saccharomyces cerevisiae (strain ATCC 204508 / S288c) (Baker's yeast).